We begin with the raw amino-acid sequence, 215 residues long: Probable serine/threonine-protein kinase 2 (215 aa).

Positions 1 to 205 (MKPEQLVYLN…WLLKEMEQLL (205 aa)) constitute a Protein kinase domain.

It belongs to the protein kinase superfamily. Ser/Thr protein kinase family. Interacts with the kinase domain of host EIF2AK2.

The protein resides in the host cytoplasm. It carries out the reaction L-seryl-[protein] + ATP = O-phospho-L-seryl-[protein] + ADP + H(+). It catalyses the reaction L-threonyl-[protein] + ATP = O-phospho-L-threonyl-[protein] + ADP + H(+). In terms of biological role, plays a role in the inhibition of host eIF2alpha/EIF2S1 phosphorylation, thereby increasing viral fitness. In the insect host, targets the endogenous insect heme-regulated inhibitor (HRI)-like eIF2alpha kinase. This Autographa californica nuclear polyhedrosis virus (AcMNPV) protein is Probable serine/threonine-protein kinase 2 (PK2).